We begin with the raw amino-acid sequence, 87 residues long: Potassium channel toxin TsTXK-beta/Cryptide TyPep-16 (87 aa).

The N-terminal stretch at 1–19 (MERKLALLLILGMVTLASC) is a signal peptide. The region spanning 53 to 87 (QFGCPAYEGYCNDHCNDIERKDGECHGFKCKCAKD) is the BetaSPN-type CS-alpha/beta domain. 3 disulfide bridges follow: C56/C77, C63/C82, and C67/C84.

It belongs to the long chain scorpion toxin family. Class 1 subfamily. Expressed by the venom gland.

It is found in the secreted. Functionally, specifically blocks voltage-gated potassium channels Kv4.2/KCND2. When measured at the peak current, the blocking effect of this toxin is about 65% and shows an IC(50)=652 nM. However, when measured at a later moment of the depolarising test pulse (500 ms), a 100% block of the current is observed with an IC(50)=313 nM. This may indicate a preference of the toxin for binding the inactivated state of the channel. The inhibition is completely reversible. In vivo, intraplantar injection into rat paw induces overt nociception (licking and lifting behaviors) and decreases the mechanical nociceptive threshold (hyperalgesia). Furthermore, the hyperalgesia is prolonged when intrathecal injections are performed. Its function is as follows. Induces discomfort and anxiety in mice, as it moderately diminishes locomotion (but has no effect on rearing behavior). Does not cause hemolysis, mast cell degranulation, LDH release, and does not have antimicrobial activity. Does not cause edema and pain. In terms of biological role, does not induce hemolytic activity, lactate dehydrogenase (LDH) release from mast cells, mast cell degranulation, and antimicrobial effects. In vivo, injection into mice causes moderate edema formation, but induces very weak or no change in nociceptive sensibility. It also reduces mice locomotion, suggesting an increase in anxiety, but causes no alteration in rearing (standing on hind limbs). The polypeptide is Potassium channel toxin TsTXK-beta/Cryptide TyPep-16 (Tityus serrulatus (Brazilian scorpion)).